The sequence spans 255 residues: Thiazole synthase (255 aa).

The active-site Schiff-base intermediate with DXP is Lys-96. 1-deoxy-D-xylulose 5-phosphate is bound by residues Gly-157, 183-184, and 205-206; these read AG and NT.

Belongs to the ThiG family. As to quaternary structure, homotetramer. Forms heterodimers with either ThiH or ThiS.

It localises to the cytoplasm. It carries out the reaction [ThiS sulfur-carrier protein]-C-terminal-Gly-aminoethanethioate + 2-iminoacetate + 1-deoxy-D-xylulose 5-phosphate = [ThiS sulfur-carrier protein]-C-terminal Gly-Gly + 2-[(2R,5Z)-2-carboxy-4-methylthiazol-5(2H)-ylidene]ethyl phosphate + 2 H2O + H(+). It participates in cofactor biosynthesis; thiamine diphosphate biosynthesis. Its function is as follows. Catalyzes the rearrangement of 1-deoxy-D-xylulose 5-phosphate (DXP) to produce the thiazole phosphate moiety of thiamine. Sulfur is provided by the thiocarboxylate moiety of the carrier protein ThiS. In vitro, sulfur can be provided by H(2)S. This Anoxybacillus flavithermus (strain DSM 21510 / WK1) protein is Thiazole synthase.